A 1143-amino-acid polypeptide reads, in one-letter code: DNA-directed RNA polymerase subunit beta (1143 aa).

Belongs to the RNA polymerase beta chain family. In plastids the minimal PEP RNA polymerase catalytic core is composed of four subunits: alpha, beta, beta', and beta''. When a (nuclear-encoded) sigma factor is associated with the core the holoenzyme is formed, which can initiate transcription.

Its subcellular location is the plastid. It is found in the chloroplast. It carries out the reaction RNA(n) + a ribonucleoside 5'-triphosphate = RNA(n+1) + diphosphate. Functionally, DNA-dependent RNA polymerase catalyzes the transcription of DNA into RNA using the four ribonucleoside triphosphates as substrates. In Pyropia yezoensis (Susabi-nori), this protein is DNA-directed RNA polymerase subunit beta.